A 933-amino-acid polypeptide reads, in one-letter code: Anoctamin-7 (933 aa).

Residues 1-355 are Cytoplasmic-facing; the sequence is MRMAATAWAG…YFAWLGFYTG (355 aa). The tract at residues 43–101 is disordered; sequence ETSSGSHCARSRMLRRRAQEEDSTVLIDVSPPEAEKRGSYGSTAHASEPGGQQAAACRA. A helical membrane pass occupies residues 356–376; the sequence is WLLPAAVVGTLVFLVGCFLVF. Over 377–420 the chain is Extracellular; that stretch reads SDIPTQELCGSKDSFEMCPLCLDCPFWLLSSACALAQAGRLFDH. A helical transmembrane segment spans residues 421–441; the sequence is GGTVFFSLFMALWAVLLLEYW. The Cytoplasmic portion of the chain corresponds to 442 to 499; that stretch reads KRKSATLAYRWDCSDYEDTEERPRPQFAASAPMTAPNPITGEDEPYFPERSRARRMLA. Residues 500-520 form a helical membrane-spanning segment; the sequence is GSVVIVVMVAVVVMCLVSIIL. Residues 521-550 are Extracellular-facing; that stretch reads YRAIMAIVVSRSGNTLLAAWASRIASLTGS. The helical transmembrane segment at 551–571 threads the bilayer; it reads VVNLVFILILSKIYVSLAHVL. Residues 572-588 are Cytoplasmic-facing; the sequence is TRWEMHRTQTKFEDAFT. Residues 589–609 traverse the membrane as a helical segment; the sequence is LKVFIFQFVNFYSSPVYIAFF. Topologically, residues 610–714 are extracellular; sequence KGRFVGYPGN…FDEYLEMVLQ (105 aa). A helical transmembrane segment spans residues 715-735; sequence FGFVTIFVAACPLAPLFALLN. Residues 736-763 lie on the Cytoplasmic side of the membrane; the sequence is NWVEIRLDARKFVCEYRRPVAERAQDIG. Residues 764 to 784 traverse the membrane as a helical segment; the sequence is IWFHILAGLTHLAVISNAFLL. The Extracellular segment spans residues 785–843; it reads AFSSDFLPRAYYRWTRAHDLRGFLNFTLARAPSSFAAAHNRTCRYRAFRDDDGHYSQTY. Asn809 and Asn824 each carry an N-linked (GlcNAc...) asparagine glycan. A helical transmembrane segment spans residues 844–864; sequence WNLLAIRLAFVIVFEHVVFSV. Residues 865-933 lie on the Cytoplasmic side of the membrane; it reads GRLLDLLVPD…TVPKASQLQQ (69 aa). Positions 902 to 933 are disordered; the sequence is GTNGTKDEQPEGSELSSHWTPFTVPKASQLQQ. Positions 915-933 are enriched in polar residues; sequence ELSSHWTPFTVPKASQLQQ.

This sequence belongs to the anoctamin family. In terms of tissue distribution, specifically expressed in epithelial cells of the prostate (at protein level).

The protein localises to the cell membrane. It localises to the cell junction. Its subcellular location is the endoplasmic reticulum. It is found in the cytoplasm. The protein resides in the cytosol. The enzyme catalyses a 1,2-diacyl-sn-glycero-3-phospho-L-serine(in) = a 1,2-diacyl-sn-glycero-3-phospho-L-serine(out). It carries out the reaction a beta-D-galactosyl-(1&lt;-&gt;1')-N-acylsphing-4-enine(out) = a beta-D-galactosyl-(1&lt;-&gt;1')-N-acylsphing-4-enine(in). The catalysed reaction is a 1,2-diacyl-sn-glycero-3-phosphocholine(in) = a 1,2-diacyl-sn-glycero-3-phosphocholine(out). In terms of biological role, has calcium-dependent phospholipid scramblase activity; scrambles phosphatidylserine, phosphatidylcholine and galactosylceramide. Does not exhibit calcium-activated chloride channel (CaCC) activity. May play a role in cell-cell interactions. This is Anoctamin-7 (ANO7) from Homo sapiens (Human).